The chain runs to 318 residues: 4-hydroxy-3-methylbut-2-enyl diphosphate reductase (318 aa).

C12 serves as a coordination point for [4Fe-4S] cluster. Positions 41 and 74 each coordinate (2E)-4-hydroxy-3-methylbut-2-enyl diphosphate. Dimethylallyl diphosphate is bound by residues H41 and H74. Residues H41 and H74 each contribute to the isopentenyl diphosphate site. C96 is a binding site for [4Fe-4S] cluster. H124 serves as a coordination point for (2E)-4-hydroxy-3-methylbut-2-enyl diphosphate. H124 contributes to the dimethylallyl diphosphate binding site. H124 is a binding site for isopentenyl diphosphate. Catalysis depends on E126, which acts as the Proton donor. T167 serves as a coordination point for (2E)-4-hydroxy-3-methylbut-2-enyl diphosphate. C197 contributes to the [4Fe-4S] cluster binding site. (2E)-4-hydroxy-3-methylbut-2-enyl diphosphate is bound by residues S225, S226, N227, and S269. Residues S225, S226, N227, and S269 each coordinate dimethylallyl diphosphate. Isopentenyl diphosphate is bound by residues S225, S226, N227, and S269.

It belongs to the IspH family. [4Fe-4S] cluster serves as cofactor.

It catalyses the reaction isopentenyl diphosphate + 2 oxidized [2Fe-2S]-[ferredoxin] + H2O = (2E)-4-hydroxy-3-methylbut-2-enyl diphosphate + 2 reduced [2Fe-2S]-[ferredoxin] + 2 H(+). It carries out the reaction dimethylallyl diphosphate + 2 oxidized [2Fe-2S]-[ferredoxin] + H2O = (2E)-4-hydroxy-3-methylbut-2-enyl diphosphate + 2 reduced [2Fe-2S]-[ferredoxin] + 2 H(+). Its pathway is isoprenoid biosynthesis; dimethylallyl diphosphate biosynthesis; dimethylallyl diphosphate from (2E)-4-hydroxy-3-methylbutenyl diphosphate: step 1/1. It functions in the pathway isoprenoid biosynthesis; isopentenyl diphosphate biosynthesis via DXP pathway; isopentenyl diphosphate from 1-deoxy-D-xylulose 5-phosphate: step 6/6. Its function is as follows. Catalyzes the conversion of 1-hydroxy-2-methyl-2-(E)-butenyl 4-diphosphate (HMBPP) into a mixture of isopentenyl diphosphate (IPP) and dimethylallyl diphosphate (DMAPP). Acts in the terminal step of the DOXP/MEP pathway for isoprenoid precursor biosynthesis. The polypeptide is 4-hydroxy-3-methylbut-2-enyl diphosphate reductase (Francisella tularensis subsp. mediasiatica (strain FSC147)).